The primary structure comprises 231 residues: Large ribosomal subunit protein uL1 (231 aa).

Belongs to the universal ribosomal protein uL1 family. In terms of assembly, part of the 50S ribosomal subunit.

In terms of biological role, binds directly to 23S rRNA. The L1 stalk is quite mobile in the ribosome, and is involved in E site tRNA release. Protein L1 is also a translational repressor protein, it controls the translation of the L11 operon by binding to its mRNA. This is Large ribosomal subunit protein uL1 from Acidovorax ebreus (strain TPSY) (Diaphorobacter sp. (strain TPSY)).